The sequence spans 70 residues: Small ribosomal subunit protein bS21 (70 aa).

This sequence belongs to the bacterial ribosomal protein bS21 family.

The sequence is that of Small ribosomal subunit protein bS21 (rpsU) from Helicobacter pylori (strain J99 / ATCC 700824) (Campylobacter pylori J99).